Consider the following 187-residue polypeptide: Calcium and integrin-binding family member 2 (187 aa).

EF-hand domains lie at 66–101, 103–138, and 144–179; these read KENP…LSEM, PREL…LTKE, and EVNL…APDF. Positions 157, 159, 161, 163, and 168 each coordinate Ca(2+).

Monomer. Homodimer. Enriched in central and striolar hair cells.

It localises to the cytoplasm. Its subcellular location is the cell projection. The protein localises to the stereocilium. It is found in the photoreceptor inner segment. The protein resides in the cilium. It localises to the photoreceptor outer segment. Its subcellular location is the cell membrane. The protein localises to the sarcolemma. In terms of biological role, calcium- and integrin-binding protein. Plays a role in intracellular calcium homeostasis. Critical for proper photoreceptor cell maintenance and function. Essential for development, maintenance and function of mechanosensory hair cells. In Danio rerio (Zebrafish), this protein is Calcium and integrin-binding family member 2.